A 196-amino-acid chain; its full sequence is MIPVVIEQTSRGERSYDIYSRLLKDRIIMLTGPIEDNMANSIIAQLLFLDAQDNTKDIYLYVNTPGGSVSAGLAIVDTMNFIKSDVQTIVMGMAASMGTIIASSGTKGKRFMLPNAEYMIHQPMGGTGGGTQQTDMAIAAEHLLKTRNNLEQILADNSGQPIEKVHVDAERDNWMSAQETLEYGFIDEIMTNNQLK.

Ser-96 functions as the Nucleophile in the catalytic mechanism. His-121 is an active-site residue.

The protein belongs to the peptidase S14 family. Fourteen ClpP subunits assemble into 2 heptameric rings which stack back to back to give a disk-like structure with a central cavity, resembling the structure of eukaryotic proteasomes.

The protein resides in the cytoplasm. The catalysed reaction is Hydrolysis of proteins to small peptides in the presence of ATP and magnesium. alpha-casein is the usual test substrate. In the absence of ATP, only oligopeptides shorter than five residues are hydrolyzed (such as succinyl-Leu-Tyr-|-NHMec, and Leu-Tyr-Leu-|-Tyr-Trp, in which cleavage of the -Tyr-|-Leu- and -Tyr-|-Trp bonds also occurs).. In terms of biological role, cleaves peptides in various proteins in a process that requires ATP hydrolysis. Has a chymotrypsin-like activity. Plays a major role in the degradation of misfolded proteins. The polypeptide is ATP-dependent Clp protease proteolytic subunit (Streptococcus thermophilus (strain CNRZ 1066)).